The primary structure comprises 213 residues: Urease accessory protein UreG (213 aa).

Residue glycine 14–threonine 21 coordinates GTP.

Belongs to the SIMIBI class G3E GTPase family. UreG subfamily. As to quaternary structure, homodimer. UreD, UreF and UreG form a complex that acts as a GTP-hydrolysis-dependent molecular chaperone, activating the urease apoprotein by helping to assemble the nickel containing metallocenter of UreC. The UreE protein probably delivers the nickel.

Its subcellular location is the cytoplasm. Facilitates the functional incorporation of the urease nickel metallocenter. This process requires GTP hydrolysis, probably effectuated by UreG. In Mesorhizobium japonicum (strain LMG 29417 / CECT 9101 / MAFF 303099) (Mesorhizobium loti (strain MAFF 303099)), this protein is Urease accessory protein UreG.